We begin with the raw amino-acid sequence, 28 residues long: fur leader peptide (28 aa).

Its function is as follows. Cotranscribed with fur, it is essential for fur translation. The fur ribosomal binding site (RBS) is occluded by the 5'-mRNA secondary structure, which is opened by uof translation. The polypeptide is fur leader peptide (uof) (Escherichia coli (strain K12)).